Here is a 1515-residue protein sequence, read N- to C-terminus: Metal resistance protein YCF1 (1515 aa).

At 1–32 (MAGNLVSWACKLCRSPEGFGPISFYGDFTQCF) the chain is on the vacuolar side. Residues 33–53 (IDGVILNLSAIFMITFGIRDL) traverse the membrane as a helical segment. The Cytoplasmic portion of the chain corresponds to 54 to 73 (VNLCKKKHSGIKYRRNWIIV). Residues 74–94 (SRMALVLLEIAFVSLASLNIS) traverse the membrane as a helical segment. The Vacuolar portion of the chain corresponds to 95–99 (KEEAE). Residues 100-120 (NFTIVSQYASTMLSLFVALAL) form a helical membrane-spanning segment. Over 121–130 (HWIEYDRSVV) the chain is Cytoplasmic. The chain crosses the membrane as a helical span at residues 131-151 (ANTVLLFYWLFETFGNFAKLI). Residues 152-169 (NILIRHTYEGIWYSGQTG) lie on the Vacuolar side of the membrane. A helical membrane pass occupies residues 170–190 (FILTLFQVITCASILLLEALP). The Cytoplasmic segment spans residues 191–278 (KKPLMPHQHI…QKSNPSLSWA (88 aa)). Ser-251 carries the phosphoserine modification. Residues 279 to 299 (ICRTFGSKMLLAAFFKAIHDV) form a helical membrane-spanning segment. An ABC transmembrane type-1 1 domain is found at 287–590 (MLLAAFFKAI…IPMVLNSFIE (304 aa)). Residues 300–345 (LAFTQPQLLRILIKFVTDYNSERQDDHSSLQGFENNHPQKLPIVRG) are Vacuolar-facing. The helical transmembrane segment at 346-366 (FLIAFAMFLVGFTQTSVLHQY) threads the bilayer. The Cytoplasmic segment spans residues 367–422 (FLNVFNTGMYIKSALTALIYQKSLVLSNEASGLSSTGDIVNLMSVDVQKLQDLTQW). A helical transmembrane segment spans residues 423 to 443 (LNLIWSGPFQIIICLYSLYKL). Residues 444–446 (LGN) lie on the Vacuolar side of the membrane. Residues 447–467 (SMWVGVIILVIMMPLNSFLMR) traverse the membrane as a helical segment. Residues 468–530 (IQKKLQKSQM…NLTKLGCYMA (63 aa)) lie on the Cytoplasmic side of the membrane. The helical transmembrane segment at 531–551 (VTSFQFNIVPFLVSCCTFAVF) threads the bilayer. The Vacuolar segment spans residues 552–572 (VYTEDRALTTDLVFPALTLFN). The helical transmembrane segment at 573-593 (LLSFPLMIIPMVLNSFIEASV) threads the bilayer. The Cytoplasmic segment spans residues 594 to 943 (SIGRLFTFFT…VKWNIYLEYA (350 aa)). One can recognise an ABC transporter 1 domain in the interval 626–853 (INIGDDATFL…ADSPLWKLLN (228 aa)). 663–670 (GKVGSGKT) contacts ATP. A phosphoserine mark is found at Ser-873, Ser-903, and Ser-908. Thr-911 bears the Phosphothreonine mark. Ser-914 carries the phosphoserine modification. The chain crosses the membrane as a helical span at residues 944-964 (KACNPKSVCVFILFIVISMFL). One can recognise an ABC transmembrane type-1 2 domain in the interval 951–1235 (VCVFILFIVI…IVRMTVEVET (285 aa)). Topologically, residues 965-1001 (SVMGNVWLKHWSEVNSRYGSNPNAARYLAIYFALGIG) are vacuolar. A helical membrane pass occupies residues 1002 to 1023 (SALATLIQTIVLWVFCTIHASK). Over 1024–1066 (YLHNLMTNSVLRAPMTFFETTPIGRILNRFSNDIYKVDALLGR) the chain is Cytoplasmic. The chain crosses the membrane as a helical span at residues 1067 to 1087 (TFSQFFVNAVKVTFTITVICA). Position 1088 (Thr-1088) is a topological domain, vacuolar. The chain crosses the membrane as a helical span at residues 1089 to 1109 (TWQFIFIIIPLSVFYIYYQQY). At 1110-1180 (YLRTSRELRR…NANRWLAYRL (71 aa)) the chain is on the cytoplasmic side. A helical membrane pass occupies residues 1181–1201 (ELIGSIIILGAATLSVFRLKQ). At 1202 to 1205 (GTLT) the chain is on the vacuolar side. The chain crosses the membrane as a helical span at residues 1206–1226 (AGMVGLSLSYALQITQTLNWI). The Cytoplasmic segment spans residues 1227–1515 (VRMTVEVETN…CMEAGLVNEN (289 aa)). Positions 1272–1507 (IKFNNYSTRY…NKSLFYSLCM (236 aa)) constitute an ABC transporter 2 domain. 1306-1313 (GRTGAGKS) contacts ATP.

This sequence belongs to the ABC transporter superfamily. ABCC family. Conjugate transporter (TC 3.A.1.208) subfamily.

The protein resides in the vacuole membrane. It carries out the reaction Cd(2+)(in) + ATP + H2O = Cd(2+)(out) + ADP + phosphate + H(+). It catalyses the reaction an S-substituted glutathione(in) + ATP + H2O = an S-substituted glutathione(out) + ADP + phosphate + H(+). Functionally, cooperates for the ATP-dependent vacuolar transport of bilirubin and glutathione conjugates. This chain is Metal resistance protein YCF1 (YCF1), found in Saccharomyces cerevisiae (strain ATCC 204508 / S288c) (Baker's yeast).